A 158-amino-acid chain; its full sequence is Glycine/sarcosine/betaine reductase complex component A (158 aa).

Residue selenocysteine 44 is part of the active site. Selenocysteine 44 is a non-standard amino acid (selenocysteine).

This sequence belongs to the GrdA family. Monomer. Component of the glycine, sarcosine and betaine reductase complexes, together with components B and C.

The enzyme catalyses acetyl phosphate + [thioredoxin]-disulfide + NH4(+) + H2O = [thioredoxin]-dithiol + glycine + phosphate + H(+). It carries out the reaction acetyl phosphate + methylamine + [thioredoxin]-disulfide + H2O = sarcosine + [thioredoxin]-dithiol + phosphate + H(+). It catalyses the reaction acetyl phosphate + trimethylamine + [thioredoxin]-disulfide + H2O = glycine betaine + [thioredoxin]-dithiol + phosphate + H(+). In the first step of glycine, betaine and sarcosine reductases, the substrate is bound to component PB via a Schiff base intermediate. Then the PB-activated substrate is nucleophilically attacked by the selenol anion of component PA to transform it to a carboxymethylated selenoether and the respective amine. By action of component PC, acetyl phosphate is formed, leaving component PA in its oxidized state. Finally component PA becomes reduced by the thioredoxin system to start a new catalytic cycle of reductive deamination. The protein is Glycine/sarcosine/betaine reductase complex component A of Clostridium botulinum (strain ATCC 19397 / Type A).